The chain runs to 928 residues: Eukaryotic translation initiation factor 3 subunit C (928 aa).

Disordered regions lie at residues 1–37 (MSRF…SDDE) and 157–286 (FREA…EDGE). The segment covering 11-20 (SESESSEEEV) has biased composition (acidic residues). Positions 22 to 33 (TQFNNKAQNFQF) are enriched in polar residues. 4 positions are modified to phosphoserine: Ser34, Ser165, Ser177, and Ser186. Residues 162–171 (DQESDVDEGE) show a composition bias toward acidic residues. A compositionally biased stretch (basic and acidic residues) spans 172 to 184 (GDVHDSDADRAGD). The segment covering 215–240 (DDDDSEDSIDWDPDTESETESSEDEN) has biased composition (acidic residues). Positions 245-264 (MRERFLKRTTEKEDKDDDKR) are enriched in basic and acidic residues. Residues 265-277 (KDKRKEQKHKVRK) are compositionally biased toward basic residues. The 177-residue stretch at 656-832 (FHMHINLELL…ETVVMHRSEP (177 aa)) folds into the PCI domain. The tract at residues 864 to 928 (FFQRGNMGNR…QQQVHTIDEE (65 aa)) is disordered. Basic residues predominate over residues 898-909 (QRNRNQRGHHKQ). Positions 910–921 (NQQQNQQQQQQQ) are enriched in low complexity.

It belongs to the eIF-3 subunit C family. As to quaternary structure, component of the eukaryotic translation initiation factor 3 (eIF-3) complex. The eIF-3 complex interacts with pix.

The protein resides in the cytoplasm. Its function is as follows. Component of the eukaryotic translation initiation factor 3 (eIF-3) complex, which is involved in protein synthesis of a specialized repertoire of mRNAs and, together with other initiation factors, stimulates binding of mRNA and methionyl-tRNAi to the 40S ribosome. The eIF-3 complex specifically targets and initiates translation of a subset of mRNAs involved in cell proliferation. The chain is Eukaryotic translation initiation factor 3 subunit C from Drosophila grimshawi (Hawaiian fruit fly).